We begin with the raw amino-acid sequence, 2053 residues long: Cell adhesion molecule DSCAML1 (2053 aa).

An N-terminal signal peptide occupies residues 1–18 (MWLVTFLLLLDSLHKARP). Ig-like C2-type domains are found at residues 19–119 (EDVG…NIRI), 115–217 (PNIR…ARLS), 226–310 (PTIL…GILT), 314–396 (PLHV…QTAQ), 408–501 (PRIV…ARIN), 506–586 (PSIR…LSIS), 596–685 (PPLI…RQLI), 690–784 (PRFV…MFLT), and 788–885 (PAMI…LTVQ). Residues 19-1591 (EDVGTSLYFV…AQGEGDDVKK (1573 aa)) lie on the Extracellular side of the membrane. Intrachain disulfides connect Cys47/Cys103, Cys146/Cys198, Cys247/Cys294, Cys336/Cys386, Cys429/Cys485, Cys526/Cys575, and Cys617/Cys669. The N-linked (GlcNAc...) asparagine glycan is linked to Asn79. N-linked (GlcNAc...) asparagine glycans are attached at residues Asn368 and Asn471. Residues Asn666 and Asn710 are each glycosylated (N-linked (GlcNAc...) asparagine). Residues Cys711 and Cys767 are joined by a disulfide bond. A glycan (N-linked (GlcNAc...) asparagine) is linked at Asn809. Cysteines 810 and 867 form a disulfide. Fibronectin type-III domains follow at residues 887–984 (PPDP…TEEA), 989–1088 (PPMD…TLED), 1093–1189 (PPEN…TKED), and 1193–1288 (PPAG…AGKA). Asn1144 and Asn1162 each carry an N-linked (GlcNAc...) asparagine glycan. The region spanning 1278–1377 (EKVTIEPAGK…TGGFDTIIVN (100 aa)) is the Ig-like C2-type 10 domain. An intrachain disulfide couples Cys1311 to Cys1363. An N-linked (GlcNAc...) asparagine glycan is attached at Asn1345. 2 Fibronectin type-III domains span residues 1383 to 1477 (PPDQ…THGR) and 1478 to 1578 (EPSF…TIPP). Asn1561 carries N-linked (GlcNAc...) asparagine glycosylation. The helical transmembrane segment at 1592 to 1612 (LFTIGCPVILATLGVALLFVV) threads the bilayer. Residues 1613 to 2053 (RKKRKEKRLK…GAYSKSYTLV (441 aa)) lie on the Cytoplasmic side of the membrane. 4 disordered regions span residues 1716–1741 (LIDMSDIRPGTNPVSRKNVKSAHSTR), 1773–1803 (HGVTVTESDSYSASLSQDTDKGRNSMVSTES), 1840–1862 (SSDQMTTGTNENADSMTSMSTPS), and 1974–2053 (LAMP…YTLV). Residues 1732 to 1741 (KNVKSAHSTR) show a composition bias toward basic residues. Positions 1773–1789 (HGVTVTESDSYSASLSQ) are enriched in polar residues. Residues 1977–1993 (PAPPAGTAPPAPGPTPS) show a composition bias toward pro residues.

As to quaternary structure, homodimer; mediates homophilic interactions to promote cell adhesion. In terms of tissue distribution, in the retina, expressed in the rod photoreceptors, AII amacrine cells and rod bipolar cells (at protein level).

Its subcellular location is the cell membrane. The protein resides in the synapse. Cell adhesion molecule that plays a role in neuronal self-avoidance. Promotes repulsion between specific neuronal processes of either the same cell or the same subtype of cells. Promotes both isoneuronal self-avoidance for creating an orderly neurite arborization in retinal rod bipolar cells and heteroneuronal self-avoidance to maintain mosaic spacing between AII amacrine cells. Adhesion molecule that promotes lamina-specific synaptic connections in the retina: expressed in specific subsets of interneurons and retinal ganglion cells (RGCs) and promotes synaptic connectivity via homophilic interactions. This chain is Cell adhesion molecule DSCAML1 (Dscaml1), found in Mus musculus (Mouse).